Reading from the N-terminus, the 219-residue chain is HTH-type transcriptional activator FasR (219 aa).

Residues 1 to 30 (MSDLANTAERRGEKRPAGGNRRGNRLPRDE) form a disordered region. The region spanning 29-89 (DERRGQLLIA…AVLQRHVDNL (61 aa)) is the HTH tetR-type domain. Residues 52–71 (GMDEIADRAGVSKPVLYQHF) constitute a DNA-binding region (H-T-H motif).

In terms of assembly, homodimer.

With respect to regulation, fasR:DNA binding is regulated by long-chain acyl-CoAs (C14- to C26-CoA), which act as effector molecules that modulate the affinity of FasR for its DNA binding sequences and therefore modulate the expression of the essential fas-acpS operon. In terms of biological role, transcriptional activator that plays a central role in sensing mycobacterial long-chain fatty acids and regulating lipid biosynthesis. Activates the expression of the genes encoding the fatty acid synthase (fas) and the 4-phosphopantetheinyl transferase (acpS), whose products are involved in the fatty acid and mycolic acid biosynthesis. Specifically binds to three conserved operator sequences present in the fas-acpS promoter region. Essential for M.smegmatis viability. The protein is HTH-type transcriptional activator FasR of Mycolicibacterium smegmatis (strain ATCC 700084 / mc(2)155) (Mycobacterium smegmatis).